A 347-amino-acid chain; its full sequence is Heme A synthase (347 aa).

Helical transmembrane passes span 14-34 (VKIW…IGGI), 96-116 (FHRL…LYFM), 129-149 (FILI…MVKS), 162-182 (LAMH…HFLL), 199-219 (VFYI…LVAG), 260-280 (FIHE…LLVL), 287-307 (MYLL…TFIY), and 311-331 (IILA…SIYL). H262 serves as a coordination point for heme. H317 contributes to the heme binding site.

It belongs to the COX15/CtaA family. Type 2 subfamily. As to quaternary structure, interacts with CtaB. It depends on heme b as a cofactor.

Its subcellular location is the cell membrane. It carries out the reaction Fe(II)-heme o + 2 A + H2O = Fe(II)-heme a + 2 AH2. It functions in the pathway porphyrin-containing compound metabolism; heme A biosynthesis; heme A from heme O: step 1/1. Catalyzes the conversion of heme O to heme A by two successive hydroxylations of the methyl group at C8. The first hydroxylation forms heme I, the second hydroxylation results in an unstable dihydroxymethyl group, which spontaneously dehydrates, resulting in the formyl group of heme A. This is Heme A synthase from Ehrlichia ruminantium (strain Gardel).